A 345-amino-acid polypeptide reads, in one-letter code: Dihydroorotate dehydrogenase (quinone) (345 aa).

FMN contacts are provided by residues 65 to 69 (AGLDK) and Thr-89. Residue Lys-69 participates in substrate binding. A substrate-binding site is contributed by 114-118 (NRMGF). FMN-binding residues include Asn-142 and Asn-175. A substrate-binding site is contributed by Asn-175. Ser-178 (nucleophile) is an active-site residue. Asn-180 is a binding site for substrate. Lys-220 and Thr-248 together coordinate FMN. Residue 249 to 250 (NT) participates in substrate binding. FMN is bound by residues Gly-271, Gly-300, and 321 to 322 (YT).

Belongs to the dihydroorotate dehydrogenase family. Type 2 subfamily. In terms of assembly, monomer. The cofactor is FMN.

It localises to the cell membrane. The catalysed reaction is (S)-dihydroorotate + a quinone = orotate + a quinol. It functions in the pathway pyrimidine metabolism; UMP biosynthesis via de novo pathway; orotate from (S)-dihydroorotate (quinone route): step 1/1. In terms of biological role, catalyzes the conversion of dihydroorotate to orotate with quinone as electron acceptor. This is Dihydroorotate dehydrogenase (quinone) from Burkholderia lata (strain ATCC 17760 / DSM 23089 / LMG 22485 / NCIMB 9086 / R18194 / 383).